A 1672-amino-acid polypeptide reads, in one-letter code: Probable outer membrane protein PmpB (1672 aa).

The signal sequence occupies residues 1 to 14 (MSSMKWLSATAVFA). Disordered regions lie at residues 69–122 (IPVK…GGAF), 203–263 (NTAE…GSGG), 384–415 (EAQTNKSSVTAASQSGPNTTPTPTPPVTAKGG), and 734–765 (STGVATTATTSQSPTVSSFLPRATAGSSPAPA). Composition is skewed to low complexity over residues 77 to 88 (DDSSTSTPTTSS), 100 to 111 (SSSSSPNSGDTS), and 203 to 234 (NTAEVVPEETTPNPNPGTQTTTSQPSPTSKVQ). Polar residues-rich tracts occupy residues 235–256 (SLFTYSSSTQANGNGADSQTPS) and 384–399 (EAQTNKSSVTAASQSG). A compositionally biased stretch (low complexity) spans 734–744 (STGVATTATTS). The Autotransporter domain occupies 1379–1672 (DDAAYNNFWV…MTSCGARMIF (294 aa)).

The protein belongs to the PMP outer membrane protein family.

The protein resides in the secreted. It is found in the cell wall. It localises to the cell outer membrane. This chain is Probable outer membrane protein PmpB (pmpB), found in Chlamydia muridarum (strain MoPn / Nigg).